The chain runs to 300 residues: 4-hydroxy-tetrahydrodipicolinate synthase (300 aa).

Thr-45 contributes to the pyruvate binding site. The Proton donor/acceptor role is filled by Tyr-140. Catalysis depends on Lys-169, which acts as the Schiff-base intermediate with substrate. Ile-210 lines the pyruvate pocket.

This sequence belongs to the DapA family. Homotetramer; dimer of dimers.

The protein localises to the cytoplasm. It catalyses the reaction L-aspartate 4-semialdehyde + pyruvate = (2S,4S)-4-hydroxy-2,3,4,5-tetrahydrodipicolinate + H2O + H(+). It functions in the pathway amino-acid biosynthesis; L-lysine biosynthesis via DAP pathway; (S)-tetrahydrodipicolinate from L-aspartate: step 3/4. In terms of biological role, catalyzes the condensation of (S)-aspartate-beta-semialdehyde [(S)-ASA] and pyruvate to 4-hydroxy-tetrahydrodipicolinate (HTPA). This is 4-hydroxy-tetrahydrodipicolinate synthase from Helicobacter pylori (strain J99 / ATCC 700824) (Campylobacter pylori J99).